A 316-amino-acid polypeptide reads, in one-letter code: Pantothenate kinase (316 aa).

G95–S102 serves as a coordination point for ATP.

Belongs to the prokaryotic pantothenate kinase family.

The protein resides in the cytoplasm. It carries out the reaction (R)-pantothenate + ATP = (R)-4'-phosphopantothenate + ADP + H(+). The protein operates within cofactor biosynthesis; coenzyme A biosynthesis; CoA from (R)-pantothenate: step 1/5. This Yersinia enterocolitica serotype O:8 / biotype 1B (strain NCTC 13174 / 8081) protein is Pantothenate kinase.